We begin with the raw amino-acid sequence, 986 residues long: Ankyrin repeat, PH and SEC7 domain containing protein secG (986 aa).

A compositionally biased stretch (low complexity) spans 1-28 (MGSTSNSTKNTGSTTTTTTTAAPATTAK). Residues 1–43 (MGSTSNSTKNTGSTTTTTTTAAPATTAKHSNSAPTRPSVHYYS) form a disordered region. A compositionally biased stretch (polar residues) spans 29–43 (HSNSAPTRPSVHYYS). ANK repeat units lie at residues 34 to 63 (PTRPSVHYYSSTGDIEKLSNLLNNSATSPD), 68 to 97 (EKRTPLHHAAFCGSAACVNFLLDKKANANI), 101 to 131 (AGNTPLQWASSRGHLECIKLLVEKGGVDVNT), 135 to 164 (KNGTPLHKASLFASAECVLYLLNGKADPRA), 168 to 197 (NGETPLHHASAGGNPQCVELLIKADSKVNA), 201 to 230 (DCITPLHQASFSGHSSCVSLLLKKGAKVDP), 234 to 263 (HGISPLHNAASAGYVDCVEQLVRNGENINC), 267 to 296 (EGVTPLHHTCFNGNLQLTKRLIELGAKINM), 300 to 329 (MGETPLHKAAFNGHKEVCEYLLYLDPTMID), 334 to 363 (RQSTSLHLAAFNGLLDMVDLLIRYKAQINI), 367 to 396 (EGATPLHKASFNGHSSCAKLLVDKGAPICI), 400 to 429 (QGATPLHKAAFNGRSKCLATLIRSGAELEV), 433 to 462 (QGGTPLHNAAYNGHSDCCRILLKKGANVNA), 466 to 495 (HSSTPLHLASAAGARDTVDVLIQFKARIDA), and 499 to 528 (AGKTPLVYAIKKNHSDVARVLIRAGADLDQ). Residues 580–770 (QLAAEKQKLL…ENLYDKIVTN (191 aa)) enclose the SEC7 domain. The region spanning 784–895 (HVEKKGWLTK…WVQSIKSNIH (112 aa)) is the PH domain. The interval 911-986 (IRGRGKVSTK…PVQQQTSALS (76 aa)) is disordered. Residues 920 to 929 (KPIQNRKQTI) are compositionally biased toward polar residues. 2 stretches are compositionally biased toward low complexity: residues 936 to 953 (TTTTTTSTASNNVTSVGS) and 963 to 986 (SSGSKPVTFSSTSSPVQQQTSALS).

In Dictyostelium discoideum (Social amoeba), this protein is Ankyrin repeat, PH and SEC7 domain containing protein secG (secG).